The following is a 503-amino-acid chain: 4-trimethylaminobutyraldehyde dehydrogenase (503 aa).

Residues Lys189 and 241–245 each bind NAD(+); that span reads GSVPT. The active-site Proton acceptor is the Glu263. The active-site Nucleophile is Cys297. Glu400 lines the NAD(+) pocket.

It belongs to the aldehyde dehydrogenase family. As to quaternary structure, homotetramer.

The protein localises to the cytoplasm. It is found in the cytosol. It catalyses the reaction 4-(trimethylamino)butanal + NAD(+) + H2O = 4-(trimethylamino)butanoate + NADH + 2 H(+). The enzyme catalyses an aldehyde + NAD(+) + H2O = a carboxylate + NADH + 2 H(+). Its pathway is amine and polyamine biosynthesis; carnitine biosynthesis. In terms of biological role, converts gamma-trimethylaminobutyraldehyde into gamma-butyrobetaine with high efficiency (in vitro). Can catalyze the irreversible oxidation of a broad range of aldehydes to the corresponding acids in an NAD-dependent reaction, but with low efficiency. The protein is 4-trimethylaminobutyraldehyde dehydrogenase (aldh9A1) of Gadus morhua subsp. callarias (Baltic cod).